The following is a 78-amino-acid chain: Conotoxin Cl14.9 (78 aa).

An N-terminal signal peptide occupies residues 1–22 (MTAKATLLVLALVVMATSGVSS). Residues 23–47 (ASVAGGPVVNSDTVSRSDPERLSTR) constitute a propeptide that is removed on maturation. Isoleucine amide is present on I70. The propeptide occupies 74–78 (DITQQ).

In terms of processing, contains 2 disulfide bonds. Expressed by the venom duct.

The protein resides in the secreted. In Californiconus californicus (California cone), this protein is Conotoxin Cl14.9.